A 507-amino-acid chain; its full sequence is Probable allantoinase (507 aa).

His-105, His-107, Lys-195, His-231, His-294, and Asp-368 together coordinate Zn(2+). An N6-carboxylysine modification is found at Lys-195.

It belongs to the metallo-dependent hydrolases superfamily. Allantoinase family. As to quaternary structure, homotetramer. Zn(2+) serves as cofactor. Carboxylation allows a single lysine to coordinate two zinc ions.

It catalyses the reaction (S)-allantoin + H2O = allantoate + H(+). It functions in the pathway nitrogen metabolism; (S)-allantoin degradation; allantoate from (S)-allantoin: step 1/1. In terms of biological role, catalyzes the conversion of allantoin (5-ureidohydantoin) to allantoate by hydrolytic cleavage of the five-member hydantoin ring. Catalyzes the first step of the ureide allantoin degradation followed by the sequential activity of AAH, UGLYAH and UAH which allows a complete purine breakdown without the intermediate generation of urea. This Oryza sativa subsp. japonica (Rice) protein is Probable allantoinase (ALN).